Here is a 235-residue protein sequence, read N- to C-terminus: tRNA (guanine-N(1)-)-methyltransferase (235 aa).

S-adenosyl-L-methionine contacts are provided by residues Gly114 and 134–139; that span reads IGDYIL.

The protein belongs to the RNA methyltransferase TrmD family. In terms of assembly, homodimer.

It is found in the cytoplasm. The enzyme catalyses guanosine(37) in tRNA + S-adenosyl-L-methionine = N(1)-methylguanosine(37) in tRNA + S-adenosyl-L-homocysteine + H(+). Its function is as follows. Specifically methylates guanosine-37 in various tRNAs. In Ehrlichia ruminantium (strain Welgevonden), this protein is tRNA (guanine-N(1)-)-methyltransferase.